Here is a 160-residue protein sequence, read N- to C-terminus: Large ribosomal subunit protein uL22c (160 aa).

The protein belongs to the universal ribosomal protein uL22 family. In terms of assembly, part of the 50S ribosomal subunit.

The protein localises to the plastid. The protein resides in the chloroplast. In terms of biological role, this protein binds specifically to 23S rRNA. The globular domain of the protein is located near the polypeptide exit tunnel on the outside of the subunit, while an extended beta-hairpin is found that lines the wall of the exit tunnel in the center of the 70S ribosome. This is Large ribosomal subunit protein uL22c (rpl22) from Aethionema grandiflorum (Persian stone-cress).